A 226-amino-acid polypeptide reads, in one-letter code: Apoptosis regulator OPG045 (226 aa).

Residues 32–37 form an essential and sufficient to inhibit host NLRP1 region; it reads NVDHDY.

It belongs to the orthopoxvirus OPG045 family. As to quaternary structure, homodimer. Interacts with host pro-apoptotic protein BCL2L11 (via BH3 domain). Interacts with host NLRP1. Interacts with host BAK.

The protein resides in the host mitochondrion outer membrane. The protein localises to the host cytoplasm. Its function is as follows. Plays a role in evading host innate immune response by inhibiting host inflammasome activation. Interacts with and inhibits NLR-mediated interleukin-1 beta/IL1B production in infected cells. At the host mitochondria outer membrane, interacts with the BH3 domain of host BAK and prevents BAK from binding active BAX. In turn, host apoptosis is inhibited. The sequence is that of Apoptosis regulator OPG045 (OPG045) from Vaccinia virus (strain Western Reserve) (VACV).